Reading from the N-terminus, the 1446-residue chain is Sister chromatid cohesion protein PDS5 homolog B (1446 aa).

The stretch at 383-419 is one HEAT repeat; it reads LLVNDHLLNFVRERTLDKRWRVRKEAMMGLAQIYKKY. The residue at position 1136 (Lys-1136) is an N6-acetyllysine. The span at 1137–1155 shows a compositional bias: polar residues; sequence PLSSAGKQSQTKSSRMETV. Residues 1137-1446 form a disordered region; the sequence is PLSSAGKQSQ…RRRSSKRERR (310 aa). Phosphoserine is present on residues Ser-1140, Ser-1162, Ser-1166, Ser-1176, Ser-1182, and Ser-1191. Over residues 1156–1167 the composition is skewed to low complexity; it reads SNASSSSNPSSP. A compositionally biased stretch (basic and acidic residues) spans 1172 to 1184; sequence GRLDSSEMDHSEN. 2 stretches are compositionally biased toward basic and acidic residues: residues 1196-1212 and 1223-1241; these read KKSD…LEKP and PEEK…EQKP. A compositionally biased stretch (basic residues) spans 1243–1252; that stretch reads GSQRGRKRGR. Residues 1247–1259 constitute a DNA-binding region (a.T hook 1); the sequence is GRKRGRTASDSDE. Residue Thr-1253 is modified to Phosphothreonine. 2 positions are modified to phosphoserine: Ser-1255 and Ser-1257. Positions 1263 to 1272 are enriched in basic and acidic residues; it reads PEEKRHKEEL. Ser-1281 is modified (phosphoserine). A DNA-binding region (a.T hook 2) is located at residues 1285-1297; the sequence is KGKRGRPPKPLGG. Basic residues-rich tracts occupy residues 1308-1317 and 1339-1351; these read TSKKGNKKKL and SKSK…KRAQ. The span at 1353–1370 shows a compositional bias: polar residues; it reads RAESPETSAVESTQSTPQ. 2 positions are modified to phosphoserine: Ser-1356 and Ser-1364. Phosphothreonine is present on Thr-1365. Ser-1367 is modified (phosphoserine). Thr-1368 carries the phosphothreonine modification. The segment at residues 1370–1382 is a DNA-binding region (a.T hook 3); that stretch reads QKGRGRPSKAPSP. 3 positions are modified to phosphoserine: Ser-1381, Ser-1415, and Ser-1418. A compositionally biased stretch (acidic residues) spans 1421–1431; sequence TTQEGAEEEDI. Basic residues predominate over residues 1436–1446; the sequence is VRRRSSKRERR.

It belongs to the PDS5 family. As to quaternary structure, interacts with the cohesin complex. Interacts with RAD21; the interaction is direct. Interacts with WAPL (via FGF motifs) or CDCA5 (via the FGF motif); the interaction is direct, cohesin-dependent and competitive. In terms of tissue distribution, expressed in prostate.

It is found in the nucleus. In terms of biological role, regulator of sister chromatid cohesion in mitosis which may stabilize cohesin complex association with chromatin. May couple sister chromatid cohesion during mitosis to DNA replication. Cohesion ensures that chromosome partitioning is accurate in both meiotic and mitotic cells and plays an important role in DNA repair. Plays a role in androgen-induced proliferative arrest in prostate cells. The sequence is that of Sister chromatid cohesion protein PDS5 homolog B (Pds5b) from Mus musculus (Mouse).